A 253-amino-acid chain; its full sequence is REF/SRPP-like protein Os05g0151300/LOC_Os05g05940 (253 aa).

The interval 1 to 26 is disordered; the sequence is MADSGSDAPISNRPEEEVTVEKTPEM. A compositionally biased stretch (basic and acidic residues) spans 13 to 26; that stretch reads RPEEEVTVEKTPEM.

It belongs to the REF/SRPP family.

The polypeptide is REF/SRPP-like protein Os05g0151300/LOC_Os05g05940 (Oryza sativa subsp. japonica (Rice)).